A 328-amino-acid polypeptide reads, in one-letter code: MIEKIWSGESPLWRLLLPLSWLYGLVSGAIRLCYKLKLKRTWRAPVPVVVVGNLTAGGNGKTPVVVWLVEQLQQRGIRVGVVSRGYGGKAESYPLLLSADTTTAQAGDEPVLIYQRTDAAVAVSPVRSDAIKAILAQHPDVQIIVTDDGLQHYRLARDVEIVVIDGVRRFGNGWWLPAGPMRERAGRLKSVDAVIVNGGVPRSGEIPMHLLPGQAVNLRTGTRCDVAQLEHVVAMAGIGHPPRFFATLKMCGVQPEKCVPLADHQSLNHADVSALVSAGQTLVMTEKDAVKCRAFAEENWWYLPVDAQLSGDEPAKLLAQLTSLASGN.

55–62 (TAGGNGKT) contributes to the ATP binding site.

The protein belongs to the LpxK family.

It catalyses the reaction a lipid A disaccharide + ATP = a lipid IVA + ADP + H(+). It participates in glycolipid biosynthesis; lipid IV(A) biosynthesis; lipid IV(A) from (3R)-3-hydroxytetradecanoyl-[acyl-carrier-protein] and UDP-N-acetyl-alpha-D-glucosamine: step 6/6. In terms of biological role, transfers the gamma-phosphate of ATP to the 4'-position of a tetraacyldisaccharide 1-phosphate intermediate (termed DS-1-P) to form tetraacyldisaccharide 1,4'-bis-phosphate (lipid IVA). This chain is Tetraacyldisaccharide 4'-kinase, found in Escherichia coli O7:K1 (strain IAI39 / ExPEC).